The following is a 370-amino-acid chain: Quinolinate synthase (370 aa).

Iminosuccinate-binding residues include His62 and Ser83. Cys128 provides a ligand contact to [4Fe-4S] cluster. Iminosuccinate-binding positions include 154 to 156 (YAN) and Ser171. Cys215 is a binding site for [4Fe-4S] cluster. Iminosuccinate contacts are provided by residues 241–243 (HPE) and Thr258. Cys312 contributes to the [4Fe-4S] cluster binding site.

This sequence belongs to the quinolinate synthase family. Type 1 subfamily. Requires [4Fe-4S] cluster as cofactor.

It is found in the cytoplasm. It carries out the reaction iminosuccinate + dihydroxyacetone phosphate = quinolinate + phosphate + 2 H2O + H(+). Its pathway is cofactor biosynthesis; NAD(+) biosynthesis; quinolinate from iminoaspartate: step 1/1. Catalyzes the condensation of iminoaspartate with dihydroxyacetone phosphate to form quinolinate. The polypeptide is Quinolinate synthase (Neisseria meningitidis serogroup B (strain ATCC BAA-335 / MC58)).